Reading from the N-terminus, the 750-residue chain is Catalase-peroxidase 1 (750 aa).

A cross-link (tryptophyl-tyrosyl-methioninium (Trp-Tyr) (with M-264)) is located at residues 90–238; that stretch reads WHSAGTYRVM…VSAAHMGLIY (149 aa). The Proton acceptor role is filled by His91. The tract at residues 199-218 is disordered; it reads NEGHKESGVIDGSESKKGHK. Over residues 200–218 the composition is skewed to basic and acidic residues; that stretch reads EGHKESGVIDGSESKKGHK. The tryptophyl-tyrosyl-methioninium (Tyr-Met) (with W-90) cross-link spans 238–264; it reads YVNPEGPDGIPDPVAAARDIRTTFSRM. A heme b-binding site is contributed by His279.

The protein belongs to the peroxidase family. Peroxidase/catalase subfamily. In terms of assembly, homodimer or homotetramer. Predominantly homodimeric. Heme b serves as cofactor. Formation of the three residue Trp-Tyr-Met cross-link is important for the catalase, but not the peroxidase activity of the enzyme.

The protein resides in the cytoplasm. The enzyme catalyses H2O2 + AH2 = A + 2 H2O. It carries out the reaction 2 H2O2 = O2 + 2 H2O. Functionally, bifunctional enzyme with both catalase and broad-spectrum peroxidase activity. This Pyricularia oryzae (strain 70-15 / ATCC MYA-4617 / FGSC 8958) (Rice blast fungus) protein is Catalase-peroxidase 1.